The chain runs to 428 residues: MKTSIFKSLYVQVLTAIAIGILLGHFYPELGAQMKPFGDAFVKLIKMVIAPVIFCTVVTGIAGMESMKAVGRTGAVALLYFEVVSTIALIIGLIIVNVVQPGAGMNVDPSTLDAKAVAVYAEQAKDQGVVAFLLDVIPGSVIGAFASGNILQVLLFAVLFGFALHRLGSKGQLIFNVIESFSQVIFGIINMIMRLAPIGAFGAMAFTIGKYGVGTLVQLGQLIICFYITCILFVVVVLGSIARATGFSIFKFIRYIREELLIVLGTSSSESALPRMLDKMEKLGCRKSVVGLVIPTGYSFNLDGTSIYLTMAAVFIAQATNSHMDIFHQITLLVVLLLSSKGAAGVTGSGFIVLAATISAVGHLPVAGLALILGIDRFMSEARALTNLVGNGVATVVVAKWVKELDAKQMDDVLNNRVPANKSHELSS.

The next 9 helical transmembrane spans lie at 8–28 (SLYV…HFYP), 44–64 (LIKM…IAGM), 76–96 (VALL…LIIV), 142–162 (IGAF…LFGF), 184–204 (VIFG…FGAM), 222–242 (LIIC…GSIA), 289–309 (VVGL…SIYL), 326–346 (IFHQ…AAGV), and 352–372 (IVLA…LALI).

This sequence belongs to the dicarboxylate/amino acid:cation symporter (DAACS) (TC 2.A.23) family.

The protein localises to the cell inner membrane. Responsible for the transport of dicarboxylates such as succinate, fumarate, and malate from the periplasm across the membrane. This Klebsiella pneumoniae (strain 342) protein is C4-dicarboxylate transport protein.